The primary structure comprises 339 residues: N-acetylmuramate/N-acetylglucosamine kinase (339 aa).

This sequence belongs to the kinase AmgK family.

It catalyses the reaction N-acetyl-D-muramate + ATP = N-acetyl-alpha-D-muramate 1-phosphate + ADP + H(+). The catalysed reaction is N-acetyl-D-glucosamine + ATP = N-acetyl-alpha-D-glucosamine 1-phosphate + ADP + H(+). It participates in cell wall biogenesis; peptidoglycan recycling. Sugar kinase that catalyzes the ATP-dependent phosphorylation of N-acetylmuramate (MurNAc) and N-acetylglucosamine (GlcNAc) at its C1 hydroxyl group, leading to MurNAc alpha-1P and GlcNAc alpha-1P, respectively. Is involved in peptidoglycan recycling as part of a cell wall recycling pathway that bypasses de novo biosynthesis of the peptidoglycan precursor UDP-MurNAc. Plays a role in intrinsic resistance to fosfomycin, which targets the de novo synthesis of UDP-MurNAc. Is also able to use N-acetylgalactosamine (GalNAc) as a substrate, but not N-acetylmannosamine, N-deacetylated sugars or glucose. The polypeptide is N-acetylmuramate/N-acetylglucosamine kinase (Pseudomonas putida (strain ATCC 47054 / DSM 6125 / CFBP 8728 / NCIMB 11950 / KT2440)).